The primary structure comprises 303 residues: Methionyl-tRNA formyltransferase (303 aa).

(6S)-5,6,7,8-tetrahydrofolate is bound at residue 108–111; the sequence is SDLP.

The protein belongs to the Fmt family.

The catalysed reaction is L-methionyl-tRNA(fMet) + (6R)-10-formyltetrahydrofolate = N-formyl-L-methionyl-tRNA(fMet) + (6S)-5,6,7,8-tetrahydrofolate + H(+). Functionally, attaches a formyl group to the free amino group of methionyl-tRNA(fMet). The formyl group appears to play a dual role in the initiator identity of N-formylmethionyl-tRNA by promoting its recognition by IF2 and preventing the misappropriation of this tRNA by the elongation apparatus. This is Methionyl-tRNA formyltransferase from Rickettsia africae (strain ESF-5).